The sequence spans 603 residues: Elongation factor 4 (603 aa).

The tr-type G domain occupies 7–189; it reads SRIRNFSIIA…AIVQQVPPPA (183 aa). GTP is bound by residues 19-24 and 136-139; these read DHGKST and NKID.

This sequence belongs to the TRAFAC class translation factor GTPase superfamily. Classic translation factor GTPase family. LepA subfamily.

It localises to the cell inner membrane. It catalyses the reaction GTP + H2O = GDP + phosphate + H(+). Functionally, required for accurate and efficient protein synthesis under certain stress conditions. May act as a fidelity factor of the translation reaction, by catalyzing a one-codon backward translocation of tRNAs on improperly translocated ribosomes. Back-translocation proceeds from a post-translocation (POST) complex to a pre-translocation (PRE) complex, thus giving elongation factor G a second chance to translocate the tRNAs correctly. Binds to ribosomes in a GTP-dependent manner. In Synechocystis sp. (strain ATCC 27184 / PCC 6803 / Kazusa), this protein is Elongation factor 4.